Consider the following 240-residue polypeptide: Octanoyltransferase (240 aa).

Residues 31 to 216 (GQVGDTLLLL…HLCAVFDLEP (186 aa)) form the BPL/LPL catalytic domain. Substrate-binding positions include 76–83 (RGGGATYH), 145–147 (AIG), and 159–161 (GLA). C177 functions as the Acyl-thioester intermediate in the catalytic mechanism.

This sequence belongs to the LipB family.

The protein localises to the cytoplasm. The catalysed reaction is octanoyl-[ACP] + L-lysyl-[protein] = N(6)-octanoyl-L-lysyl-[protein] + holo-[ACP] + H(+). Its pathway is protein modification; protein lipoylation via endogenous pathway; protein N(6)-(lipoyl)lysine from octanoyl-[acyl-carrier-protein]: step 1/2. Catalyzes the transfer of endogenously produced octanoic acid from octanoyl-acyl-carrier-protein onto the lipoyl domains of lipoate-dependent enzymes. Lipoyl-ACP can also act as a substrate although octanoyl-ACP is likely to be the physiological substrate. The protein is Octanoyltransferase of Roseiflexus sp. (strain RS-1).